An 801-amino-acid chain; its full sequence is Triacylglycerol lipase SDP1L (801 aa).

N-linked (GlcNAc...) asparagine glycosylation is present at Asn-130. The next 2 membrane-spanning stretches (helical) occupy residues 232–249 (ALLLSGGASLGAFHLGVV) and 261–277 (IIAGSSVGSVMCAVVGT). The region spanning 233-436 (LLLSGGASLG…EMDLPMIQLK (204 aa)) is the PNPLA domain. The GXSXG signature appears at 264–268 (GSSVG). Ser-266 serves as the catalytic Nucleophile. N-linked (GlcNAc...) asparagine glycosylation is found at Asn-328 and Asn-332. Asp-423 serves as the catalytic Proton acceptor. 6 N-linked (GlcNAc...) asparagine glycosylation sites follow: Asn-605, Asn-620, Asn-649, Asn-653, Asn-708, and Asn-759. Residues 648–675 (SNRTSNLSHTYDAGSECDSPEAEDWTRS) are disordered. Positions 750–801 (MNSEPEDSQNESEIPETPESVQLDSPEKDIIDGESSASEDGDAQANLIHDHE) are disordered. The segment covering 753–765 (EPEDSQNESEIPE) has biased composition (acidic residues).

Highly expressed in mature pollen.

The protein localises to the lipid droplet. The protein resides in the membrane. It catalyses the reaction a triacylglycerol + H2O = a diacylglycerol + a fatty acid + H(+). Functionally, may be involved in the release of fatty acids from the oil body in germinating seedlings. Can hydrolyze triacylglycerols in vitro. This is Triacylglycerol lipase SDP1L from Arabidopsis thaliana (Mouse-ear cress).